The sequence spans 197 residues: Adenylate kinase (197 aa).

An ATP-binding site is contributed by 16–21; the sequence is GAGKGT. Residues 36–65 form an NMP region; the sequence is STGDILRDHVARGTELGQQVKPILDAGHLV. Residues Thr37, Arg42, 63-65, 90-93, and Gln97 contribute to the AMP site; these read HLV and GFPR. Residues 131-147 are LID; the sequence is ERGNQAQARGEAVRSDD. Arg132 provides a ligand contact to ATP. AMP contacts are provided by Arg144 and Arg155. Gly183 contacts ATP.

The protein belongs to the adenylate kinase family. In terms of assembly, monomer.

It localises to the cytoplasm. It catalyses the reaction AMP + ATP = 2 ADP. It participates in purine metabolism; AMP biosynthesis via salvage pathway; AMP from ADP: step 1/1. Its function is as follows. Catalyzes the reversible transfer of the terminal phosphate group between ATP and AMP. Plays an important role in cellular energy homeostasis and in adenine nucleotide metabolism. This is Adenylate kinase from Deinococcus deserti (strain DSM 17065 / CIP 109153 / LMG 22923 / VCD115).